The sequence spans 245 residues: tRNA pseudouridine synthase A (245 aa).

Asp-52 functions as the Nucleophile in the catalytic mechanism. Tyr-111 contributes to the substrate binding site.

This sequence belongs to the tRNA pseudouridine synthase TruA family. As to quaternary structure, homodimer.

It catalyses the reaction uridine(38/39/40) in tRNA = pseudouridine(38/39/40) in tRNA. Formation of pseudouridine at positions 38, 39 and 40 in the anticodon stem and loop of transfer RNAs. This Thermotoga maritima (strain ATCC 43589 / DSM 3109 / JCM 10099 / NBRC 100826 / MSB8) protein is tRNA pseudouridine synthase A.